Here is a 379-residue protein sequence, read N- to C-terminus: MAYKILVVDDSIFFRRRVKEILEQDPSLQVIGEARNGQEAIEMVATLNPDVVTMDVEMPIMDGITAVKKIMARKPVPIIMFSSLTLQGAKATLDALDSGAMDFLPKKFEDIAANRQDAVALLQSRVKSLCRKQHGLRPASVRVAPPKAILFNKPVSRNPAKRSVQATSSIPLGAPLYHSSSSGIPSGKKYRCLAIGTSTGGPVALQKVLTAVPKNFPYPIFIVQHMPGSFTKAFAERLNQLSQLTVKEAMNGEEVKAGVAYLAPGGRQMTVQGDSQRVSFRIYDAPDSADILYKPCVDITFASIAHVYHGDVLGVILTGMGSDGKLGASKLKSKGAKIWVQDELSSVVYGMPQAVMNAGIAEKEFSIDAFESHILKEMA.

In terms of domain architecture, Response regulatory spans 4 to 121 (KILVVDDSIF…AANRQDAVAL (118 aa)). Asp-55 is modified (4-aspartylphosphate). The region spanning 186–379 (SGKKYRCLAI…FESHILKEMA (194 aa)) is the CheB-type methylesterase domain. Active-site residues include Ser-198, His-225, and Asp-323.

The protein belongs to the CheB family. Phosphorylated by CheA. Phosphorylation of the N-terminal regulatory domain activates the methylesterase activity.

It is found in the cytoplasm. It catalyses the reaction [protein]-L-glutamate 5-O-methyl ester + H2O = L-glutamyl-[protein] + methanol + H(+). It carries out the reaction L-glutaminyl-[protein] + H2O = L-glutamyl-[protein] + NH4(+). Functionally, involved in chemotaxis. Part of a chemotaxis signal transduction system that modulates chemotaxis in response to various stimuli. Catalyzes the demethylation of specific methylglutamate residues introduced into the chemoreceptors (methyl-accepting chemotaxis proteins or MCP) by CheR. Also mediates the irreversible deamidation of specific glutamine residues to glutamic acid. In Pseudoalteromonas atlantica (strain T6c / ATCC BAA-1087), this protein is Protein-glutamate methylesterase/protein-glutamine glutaminase.